The chain runs to 212 residues: Uracil phosphoribosyltransferase (212 aa).

5-phospho-alpha-D-ribose 1-diphosphate-binding positions include Arg78, Arg103, and 130–138 (DPMLATGSS). Uracil contacts are provided by residues Ile193 and 198-200 (GDA). Residue Asp199 participates in 5-phospho-alpha-D-ribose 1-diphosphate binding.

It belongs to the UPRTase family. Requires Mg(2+) as cofactor.

The enzyme catalyses UMP + diphosphate = 5-phospho-alpha-D-ribose 1-diphosphate + uracil. The protein operates within pyrimidine metabolism; UMP biosynthesis via salvage pathway; UMP from uracil: step 1/1. Allosterically activated by GTP. Its function is as follows. Catalyzes the conversion of uracil and 5-phospho-alpha-D-ribose 1-diphosphate (PRPP) to UMP and diphosphate. In Pseudomonas fluorescens (strain Pf0-1), this protein is Uracil phosphoribosyltransferase.